Here is a 236-residue protein sequence, read N- to C-terminus: Eukaryotic translation initiation factor 3 subunit J (236 aa).

A disordered region spans residues 1–84 (MADDWESAAD…RLEEEAEAQR (84 aa)). Over residues 28–46 (GEDEDEDIKDSWEDEEEKK) the composition is skewed to acidic residues. Composition is skewed to basic and acidic residues over residues 47-58 (DEEKPTKTEAPA) and 68-77 (AKLEQQARLE).

The protein belongs to the eIF-3 subunit J family. As to quaternary structure, component of the eukaryotic translation initiation factor 3 (eIF-3) complex. The eIF-3 complex interacts with pix.

It is found in the cytoplasm. Component of the eukaryotic translation initiation factor 3 (eIF-3) complex, which is involved in protein synthesis of a specialized repertoire of mRNAs and, together with other initiation factors, stimulates binding of mRNA and methionyl-tRNAi to the 40S ribosome. The eIF-3 complex specifically targets and initiates translation of a subset of mRNAs involved in cell proliferation. In Drosophila yakuba (Fruit fly), this protein is Eukaryotic translation initiation factor 3 subunit J.